The following is a 1440-amino-acid chain: Gag-Pro-Pol polyprotein (1440 aa).

The N-myristoyl glycine; by host moiety is linked to residue Gly2. The segment at 93-117 (AREAPPSAPPADDPQKPPPYPEHAQ) is disordered. The PTAP/PSAP motif motif lies at 98-101 (PSAP). A compositionally biased stretch (pro residues) spans 98-113 (PSAPPADDPQKPPPYP). Residues 109–112 (PPPY) carry the PPXY motif motif. 2 consecutive CCHC-type zinc fingers follow at residues 349 to 366 (QPCFRCGQAGHWSRDCKQ) and 372 to 389 (GPCPLCQDPAHWKQDCPQ). Positions 457-535 (VQALLDTGAD…DQWTILGRDA (79 aa)) constitute a Peptidase A2 domain. Catalysis depends on Asp462, which acts as the For protease activity; shared with dimeric partner. In terms of domain architecture, Reverse transcriptase spans 593-783 (LEAKHIEPYQ…GSIHFLGQVI (191 aa)). Mg(2+) contacts are provided by Asp659, Asp734, Asp735, Asp1019, Glu1052, Asp1074, Asp1135, Asp1208, and Asp1265. One can recognise an RNase H type-1 domain in the interval 1010–1143 (IDHAPCLFSD…TDALMLAPLL (134 aa)). The Integrase catalytic domain occupies 1197-1366 (RGHAPNVIWQ…PSIPENTLPP (170 aa)). A DNA-binding region (integrase-type) is located at residues 1371-1420 (KWYYYKIPGLTNPRWSGPVQSLKEAAGAALIPVGGSHLWIPWRLLKRGIC).

Interacts with human TSG101. This interaction is essential for budding and release of viral particles. The cofactor is Mg(2+). In terms of processing, specific enzymatic cleavages by the viral protease yield mature proteins. The polyprotein is cleaved during and after budding, this process is termed maturation. The protease is autoproteolytically processed at its N- and C-termini.

It localises to the virion. It carries out the reaction Endonucleolytic cleavage to 5'-phosphomonoester.. The enzyme catalyses DNA(n) + a 2'-deoxyribonucleoside 5'-triphosphate = DNA(n+1) + diphosphate. In terms of biological role, matrix protein p19 targets Gag, Gag-Pro and Gag-Pro-Pol polyproteins to the plasma membrane via a multipartite membrane binding signal, that includes its myristoylated N-terminus. Also mediates nuclear localization of the preintegration complex. Its function is as follows. Capsid protein p24 forms the conical core of the virus that encapsulates the genomic RNA-nucleocapsid complex. Nucleocapsid protein p15 is involved in the packaging and encapsidation of two copies of the genome. Functionally, the aspartyl protease mediates proteolytic cleavages of Gag, Gag-Pro and Gag-Pro-Pol polyproteins during or shortly after the release of the virion from the plasma membrane. Cleavages take place as an ordered, step-wise cascade to yield mature proteins. This process is called maturation. Displays maximal activity during the budding process just prior to particle release from the cell. Hydrolyzes host EIF4GI in order to shut off the capped cellular mRNA translation. The resulting inhibition of cellular protein synthesis serves to ensure maximal viral gene expression and to evade host immune response. In terms of biological role, reverse transcriptase (RT) is a multifunctional enzyme that converts the viral RNA genome into dsDNA in the cytoplasm, shortly after virus entry into the cell. This enzyme displays a DNA polymerase activity that can copy either DNA or RNA templates, and a ribonuclease H (RNase H) activity that cleaves the RNA strand of RNA-DNA heteroduplexes in a partially processive 3' to 5'-endonucleasic mode. Conversion of viral genomic RNA into dsDNA requires many steps. A tRNA-Pro binds to the primer-binding site (PBS) situated at the 5'-end of the viral RNA. RT uses the 3' end of the tRNA primer to perform a short round of RNA-dependent minus-strand DNA synthesis. The reading proceeds through the U5 region and ends after the repeated (R) region which is present at both ends of viral RNA. The portion of the RNA-DNA heteroduplex is digested by the RNase H, resulting in a ssDNA product attached to the tRNA primer. This ssDNA/tRNA hybridizes with the identical R region situated at the 3' end of viral RNA. This template exchange, known as minus-strand DNA strong stop transfer, can be either intra- or intermolecular. RT uses the 3' end of this newly synthesized short ssDNA to perform the RNA-dependent minus-strand DNA synthesis of the whole template. RNase H digests the RNA template except for a polypurine tract (PPT) situated at the 5' end of the genome. It is not clear if both polymerase and RNase H activities are simultaneous. RNase H probably can proceed both in a polymerase-dependent (RNA cut into small fragments by the same RT performing DNA synthesis) and a polymerase-independent mode (cleavage of remaining RNA fragments by free RTs). Secondly, RT performs DNA-directed plus-strand DNA synthesis using the PPT that has not been removed by RNase H as primer. PPT and tRNA primers are then removed by RNase H. The 3' and 5' ssDNA PBS regions hybridize to form a circular dsDNA intermediate. Strand displacement synthesis by RT to the PBS and PPT ends produces a blunt ended, linear dsDNA copy of the viral genome that includes long terminal repeats (LTRs) at both ends. Its function is as follows. Integrase catalyzes viral DNA integration into the host chromosome, by performing a series of DNA cutting and joining reactions. This enzyme activity takes place after virion entry into a cell and reverse transcription of the RNA genome in dsDNA. The first step in the integration process is 3' processing. This step requires a complex comprising the viral genome, matrix protein, and integrase. This complex is called the pre-integration complex (PIC). The integrase protein removes 2 nucleotides from each 3' end of the viral DNA, leaving recessed dinucleotides OH's at the 3' ends. In the second step, the PIC access cell chromosomes during cell division. The third step, termed strand transfer, the integrase protein joins the previously processed 3' ends to the 5'-ends of strands of target cellular DNA at the site of integration. The 5'-ends are produced by integrase-catalyzed staggered cuts, 5 bp apart. A Y-shaped, gapped, recombination intermediate results, with the 5'-ends of the viral DNA strands and the 3' ends of target DNA strands remaining unjoined, flanking a gap of 5 bp. The last step is viral DNA integration into host chromosome. This involves host DNA repair synthesis in which the 5 bp gaps between the unjoined strands (see above) are filled in and then ligated. The chain is Gag-Pro-Pol polyprotein (gag-pro-pol) from Human T-cell leukemia virus 3 (strain Pyl43) (HTLV-3).